The primary structure comprises 96 residues: (4S)-4-hydroxy-5-phosphonooxypentane-2,3-dione isomerase (96 aa).

Positions 2–91 (HVTLVEINVK…MTGPRKKTVF (90 aa)) constitute an ABM domain.

Belongs to the LsrG family. Homodimer.

Its subcellular location is the cytoplasm. It carries out the reaction (2S)-2-hydroxy-3,4-dioxopentyl phosphate = 3-hydroxy-2,4-dioxopentyl phosphate. Its function is as follows. Involved in the degradation of phospho-AI-2, thereby terminating induction of the lsr operon and closing the AI-2 signaling cycle. Catalyzes the conversion of (4S)-4-hydroxy-5-phosphonooxypentane-2,3-dione (P-DPD) to 3-hydroxy-5-phosphonooxypentane-2,4-dione (P-HPD). In Yersinia pseudotuberculosis serotype O:1b (strain IP 31758), this protein is (4S)-4-hydroxy-5-phosphonooxypentane-2,3-dione isomerase.